The primary structure comprises 622 residues: Iron transport multicopper oxidase fetC (622 aa).

The first 20 residues, 1 to 20 (MARLVHLTAVLAASIRLAAA), serve as a signal peptide directing secretion. At 21–552 (ATINHDFNVT…DPLPAGFTTR (532 aa)) the chain is on the extracellular side. N-linked (GlcNAc...) asparagine glycosylation is found at Asn28 and Asn74. Plastocyanin-like domains are found at residues 29-144 (VTWV…VHDP) and 154-301 (EEIV…SYDK). Cu cation-binding residues include His80 and His82. N-linked (GlcNAc...) asparagine glycans are attached at residues Asn87 and Asn112. Residues His124 and His126 each coordinate Cu cation. N-linked (GlcNAc...) asparagine glycosylation is found at Asn194, Asn198, Asn265, Asn292, and Asn358. One can recognise a Plastocyanin-like 3 domain in the interval 362-497 (KSPKVPTLYS…GLVATFVEAP (136 aa)). Cu cation contacts are provided by His412, His415, and His417. A glycan (N-linked (GlcNAc...) asparagine) is linked at Asn428. 4 residues coordinate Cu cation: His478, Cys479, His480, and His484. The chain crosses the membrane as a helical span at residues 553 to 573 (GIVALVFSCVTGILGICVVAW). Over 574 to 622 (YGMSQPLEEATAAVATLVREAQVTGSGTSPNHDDGNAAATEAGVLRRRT) the chain is Cytoplasmic. Residues 597–622 (TGSGTSPNHDDGNAAATEAGVLRRRT) form a disordered region.

It belongs to the multicopper oxidase family.

It localises to the cell membrane. Cell surface ferroxidase; part of the reductive iron assimilatory system (RIA), a siderophore-independent high affinity iron uptake mechanism. Required to oxidize Fe(2+) and release it from the transporter. The chain is Iron transport multicopper oxidase fetC from Epichloe festucae (strain E2368).